Here is a 340-residue protein sequence, read N- to C-terminus: GPALPP motifs-containing protein 1 (340 aa).

A disordered region spans residues 1–304; that stretch reads MARDLIGPAL…PQERIPFDRD (304 aa). Ala2 bears the N-acetylalanine mark. The GPALPP motif 1 signature appears at 7–12; the sequence is GPALPP. Ser28 bears the Phosphoserine mark. The GPALPP motif 2 signature appears at 32–37; the sequence is GPALPP. Over residues 60-69 the composition is skewed to acidic residues; the sequence is GNQESEEDDS. A GPALPP motif 3 motif is present at residues 92–97; sequence GPALPP. A Phosphoserine modification is found at Ser105. Positions 107 to 116 are enriched in pro residues; sequence PRPIIGPALP. The GPALPP motif 4 motif lies at 112–117; the sequence is GPALPP. The segment covering 124 to 133 has biased composition (basic and acidic residues); sequence QKSDKGRDDP. Residue Thr138 is modified to Phosphothreonine. A phosphoserine mark is found at Ser140 and Ser141. 4 stretches are compositionally biased toward basic and acidic residues: residues 163-187, 227-261, 269-279, and 287-304; these read EFEK…KPIV, PADR…KRLA, ESKRSESLMDI, and KAAE…FDRD. Lys271 participates in a covalent cross-link: Glycyl lysine isopeptide (Lys-Gly) (interchain with G-Cter in SUMO2). Residue Lys308 forms a Glycyl lysine isopeptide (Lys-Gly) (interchain with G-Cter in SUMO2) linkage.

The chain is GPALPP motifs-containing protein 1 (GPALPP1) from Homo sapiens (Human).